The chain runs to 183 residues: Gamma-crystallin N-B (183 aa).

4 Beta/gamma crystallin 'Greek key' domains span residues 6–46 (GKIC…RVES), 47–89 (GAWI…RPIR), 95–136 (YRME…RVFG), and 138–180 (GAWV…RRIV).

It belongs to the beta/gamma-crystallin family. As to quaternary structure, monomer.

In terms of biological role, crystallins are the dominant structural components of the vertebrate eye lens. The chain is Gamma-crystallin N-B (crygnb) from Danio rerio (Zebrafish).